The chain runs to 273 residues: 2,3,4,5-tetrahydropyridine-2,6-dicarboxylate N-succinyltransferase (273 aa).

Belongs to the transferase hexapeptide repeat family.

It is found in the cytoplasm. It catalyses the reaction (S)-2,3,4,5-tetrahydrodipicolinate + succinyl-CoA + H2O = (S)-2-succinylamino-6-oxoheptanedioate + CoA. It functions in the pathway amino-acid biosynthesis; L-lysine biosynthesis via DAP pathway; LL-2,6-diaminopimelate from (S)-tetrahydrodipicolinate (succinylase route): step 1/3. The chain is 2,3,4,5-tetrahydropyridine-2,6-dicarboxylate N-succinyltransferase from Bordetella petrii (strain ATCC BAA-461 / DSM 12804 / CCUG 43448).